Consider the following 447-residue polypeptide: Phospholipase A(1) DAD1, chloroplastic (447 aa).

The N-terminal 46 residues, 1–46 (MRFSLSPVRPHSVVVPSLPKQDVVSYISGTTSNRQCRCVLTLPSPS), are a transit peptide targeting the chloroplast. Positions 293-297 (GHSLG) match the GXSXG motif. The active-site Acyl-ester intermediate is Ser-295. Residues Asp-352 and His-418 each act as charge relay system in the active site.

This sequence belongs to the AB hydrolase superfamily. Lipase family. As to expression, expressed in flower buds, but not in leaves or roots. Restricted to the stamen filaments immediately before flower opening.

Its subcellular location is the plastid. The protein localises to the chloroplast. It carries out the reaction a 1,2-diacyl-sn-glycero-3-phosphocholine + H2O = a 2-acyl-sn-glycero-3-phosphocholine + a fatty acid + H(+). The enzyme catalyses 1-hexadecanoyl-2-(9Z,12Z-octadecadienoyl)-sn-glycero-3-phosphocholine + H2O = 2-(9Z,12Z-octadecadienoyl)-sn-glycero-3-phosphocholine + hexadecanoate + H(+). Functionally, sn-1-specific phospholipase that releases free fatty acids from phospholipids. Low activity on galactolipids and triacylglycerols. Catalyzes the initial step of jasmonic acid biosynthesis. Not essential for jasmonate biosynthesis after wounding or upon pathogen infection. This is Phospholipase A(1) DAD1, chloroplastic from Arabidopsis thaliana (Mouse-ear cress).